A 2248-amino-acid chain; its full sequence is Putative Polycomb group protein ASXL3 (2248 aa).

In terms of domain architecture, HTH HARE-type spans 10–84 (RTWAEAARLA…KSGLYALKKE (75 aa)). The disordered stretch occupies residues 156-232 (ALKQALRQQQ…GKQTSQHLKR (77 aa)). The span at 203–216 (KNGEADSSDKEMKH) shows a compositional bias: basic and acidic residues. The span at 219-228 (KSPTGKQTSQ) shows a compositional bias: polar residues. In terms of domain architecture, DEUBAD spans 254 to 363 (PGSILVNTNL…FERFYGEKLG (110 aa)). 11 disordered regions span residues 368-414 (ESVK…PASP), 547-583 (TSSMTHVSDTEHKESETAVETSTPKIKTGSSSLEGQF), 607-643 (CISETSFSSESPEGACTSLPSPGGETQSTSEESCTPA), 703-726 (EASPVSNLPLTSETSPMSDLPLTS), 762-853 (ERMA…ASIP), 869-1052 (LQRT…TGAR), 1123-1152 (TSKETRLPPPLSSKEGPPNLEVSSTPETKM), 1183-1203 (QQSLNPSKLPETATDLSVHSS), 1431-1462 (KLSAESLDKNSGPRNRADNSGKPQQPPGGFAP), 1573-1596 (TAPSHNFAEQARGPAPFKSEADTT), and 1990-2068 (LSPN…KRLS). 5 stretches are compositionally biased toward polar residues: residues 371 to 389 (KLTTGPNNAGAQSSSSCGT), 395 to 407 (SAQTALAEQQPKS), 564 to 580 (AVETSTPKIKTGSSSLE), 607 to 617 (CISETSFSSES), and 624 to 643 (SLPSPGGETQSTSEESCTPA). The span at 796–818 (NLTSQQKNLSNTPEPIIMSSSSI) shows a compositional bias: polar residues. Residues 937–949 (SHTSKSSEPSKSP) show a composition bias toward low complexity. 3 stretches are compositionally biased toward basic and acidic residues: residues 950–968 (DGIRNESRDSEISKRKTAE), 975–987 (CKEKRARIEDDQS), and 997–1008 (PEKEQPPREEPR). Over residues 1036–1046 (RASTSTSVSGG) the composition is skewed to polar residues. Positions 2016–2046 (HPPPPPPPPPPPPLALPPPPPPPPPLPPPLP) are enriched in pro residues. The segment at 2210 to 2247 (ELKCSCRLKAMIVCKGCGAFCHDDCIGPSKLCVACLVV) adopts a PHD-type; atypical zinc-finger fold.

The protein belongs to the Asx family. As to quaternary structure, core component of the polycomb repressive deubiquitinase (PR-DUB) complex, at least composed of BAP1, one of ASXL1, ASXL2 or (probably) ASXL3, and one of MBD5 or MBD6. Distinct combinations of ASXL and MBD proteins may preferentially bind specific histone modification marks. The PR-DUB core associates with a number of accessory proteins, including FOXK1, FOXK2, KDM1B, HCFC1 and OGT; KDM1B specifically associates with ASXL2 PR-DUB complexes. Interacts (via PHD domain) with MBD5 and MBD6 (via MBD domain); the interaction is probably direct and mediates association of MBD proteins with the PR-DUB core. Expressed in pancreatic islets, testis, neuroblastoma, head and neck tumor.

The protein localises to the nucleus. In terms of biological role, putative Polycomb group (PcG) protein. PcG proteins act by forming multiprotein complexes, which are required to maintain the transcriptionally repressive state of homeotic genes throughout development. PcG proteins are not required to initiate repression, but to maintain it during later stages of development. They probably act via methylation of histones, rendering chromatin heritably changed in its expressibility. Non-catalytic component of the PR-DUB complex, a complex that specifically mediates deubiquitination of histone H2A monoubiquitinated at 'Lys-119' (H2AK119ub1). The PR-DUB complex is an epigenetic regulator of gene expression and acts as a transcriptional coactivator, affecting genes involved in development, cell communication, signaling, cell proliferation and cell viability. ASXL1, ASXL2 and ASXL3 function redundantly in the PR-DUB complex and are essential for chromatin recruitment and transcriptional activation of associated genes. This is Putative Polycomb group protein ASXL3 (ASXL3) from Homo sapiens (Human).